A 407-amino-acid chain; its full sequence is ATP phosphoribosyltransferase regulatory subunit (407 aa).

It belongs to the class-II aminoacyl-tRNA synthetase family. HisZ subfamily. As to quaternary structure, heteromultimer composed of HisG and HisZ subunits.

Its subcellular location is the cytoplasm. The protein operates within amino-acid biosynthesis; L-histidine biosynthesis; L-histidine from 5-phospho-alpha-D-ribose 1-diphosphate: step 1/9. Functionally, required for the first step of histidine biosynthesis. May allow the feedback regulation of ATP phosphoribosyltransferase activity by histidine. This is ATP phosphoribosyltransferase regulatory subunit from Rippkaea orientalis (strain PCC 8801 / RF-1) (Cyanothece sp. (strain PCC 8801)).